The primary structure comprises 613 residues: Dihydroxy-acid dehydratase 3 (613 aa).

Asp-81 provides a ligand contact to Mg(2+). [2Fe-2S] cluster is bound at residue Cys-122. Asp-123 and Lys-124 together coordinate Mg(2+). Lys-124 carries the post-translational modification N6-carboxylysine. Cys-197 serves as a coordination point for [2Fe-2S] cluster. Residue Glu-493 coordinates Mg(2+). The active-site Proton acceptor is Ser-519.

This sequence belongs to the IlvD/Edd family. As to quaternary structure, homodimer. The cofactor is [2Fe-2S] cluster. Requires Mg(2+) as cofactor.

The catalysed reaction is (2R)-2,3-dihydroxy-3-methylbutanoate = 3-methyl-2-oxobutanoate + H2O. It catalyses the reaction (2R,3R)-2,3-dihydroxy-3-methylpentanoate = (S)-3-methyl-2-oxopentanoate + H2O. Its pathway is amino-acid biosynthesis; L-isoleucine biosynthesis; L-isoleucine from 2-oxobutanoate: step 3/4. It participates in amino-acid biosynthesis; L-valine biosynthesis; L-valine from pyruvate: step 3/4. Functions in the biosynthesis of branched-chain amino acids. Catalyzes the dehydration of (2R,3R)-2,3-dihydroxy-3-methylpentanoate (2,3-dihydroxy-3-methylvalerate) into 2-oxo-3-methylpentanoate (2-oxo-3-methylvalerate) and of (2R)-2,3-dihydroxy-3-methylbutanoate (2,3-dihydroxyisovalerate) into 2-oxo-3-methylbutanoate (2-oxoisovalerate), the penultimate precursor to L-isoleucine and L-valine, respectively. The polypeptide is Dihydroxy-acid dehydratase 3 (Nocardia farcinica (strain IFM 10152)).